Consider the following 132-residue polypeptide: Methylglyoxal synthase (132 aa).

Residues 1-132 (MNIALIAHDQ…LLEWREIEDK (132 aa)) enclose the MGS-like domain. H8 and K12 together coordinate substrate. D60 (proton donor/acceptor) is an active-site residue. H87 is a binding site for substrate.

This sequence belongs to the methylglyoxal synthase family.

The enzyme catalyses dihydroxyacetone phosphate = methylglyoxal + phosphate. Catalyzes the formation of methylglyoxal from dihydroxyacetone phosphate. The protein is Methylglyoxal synthase of Thermoanaerobacter pseudethanolicus (strain ATCC 33223 / 39E) (Clostridium thermohydrosulfuricum).